The sequence spans 123 residues: Ribonuclease P protein component (123 aa).

This sequence belongs to the RnpA family. As to quaternary structure, consists of a catalytic RNA component (M1 or rnpB) and a protein subunit.

The catalysed reaction is Endonucleolytic cleavage of RNA, removing 5'-extranucleotides from tRNA precursor.. Functionally, RNaseP catalyzes the removal of the 5'-leader sequence from pre-tRNA to produce the mature 5'-terminus. It can also cleave other RNA substrates such as 4.5S RNA. The protein component plays an auxiliary but essential role in vivo by binding to the 5'-leader sequence and broadening the substrate specificity of the ribozyme. The protein is Ribonuclease P protein component of Streptococcus pneumoniae (strain Hungary19A-6).